Reading from the N-terminus, the 205-residue chain is MTEPDPAAAEQRPSVGRNLPTFQDLPIPADTANLREGPDLNAAMLALLPLVGVWRGEGEGRDTDGDYRFGQQIVVAHDGSDYLTWDARSWRLDADGQFEQLTLRETGFWRFAPDPNDPDENQAIELVLAHAAGFVELFYGQPLNASSWELVTDALARSKSGALIGGAKRLYGIVDGGDLAYVEERVGADGGLEPHLSARLSRFAG.

The disordered stretch occupies residues 1–23 (MTEPDPAAAEQRPSVGRNLPTFQ). Residues 52-58 (GVWRGEG) carry the GXWXGXG motif. Residues T63, K168, and H195 each contribute to the heme b site.

It belongs to the nitrobindin family. As to quaternary structure, homodimer. Requires heme b as cofactor.

The catalysed reaction is peroxynitrite = nitrate. It functions in the pathway nitrogen metabolism. Its function is as follows. Heme-binding protein able to scavenge peroxynitrite and to protect free L-tyrosine against peroxynitrite-mediated nitration, by acting as a peroxynitrite isomerase that converts peroxynitrite to nitrate. Therefore, this protein likely plays a role in peroxynitrite sensing and in the detoxification of reactive nitrogen and oxygen species (RNS and ROS, respectively). Is able to bind nitric oxide (NO) in vitro, but may act as a sensor of peroxynitrite levels in vivo. In Mycobacteroides abscessus (strain ATCC 19977 / DSM 44196 / CCUG 20993 / CIP 104536 / JCM 13569 / NCTC 13031 / TMC 1543 / L948) (Mycobacterium abscessus), this protein is Peroxynitrite isomerase.